Reading from the N-terminus, the 55-residue chain is Conotoxin Cal22d (55 aa).

The propeptide occupies 1 to 5 (GRPSA).

In terms of processing, contains 4 disulfide bonds. Expressed by the venom duct.

It localises to the secreted. In terms of biological role, probable neurotoxin with unknown target. Possibly targets ion channels. The chain is Conotoxin Cal22d from Californiconus californicus (California cone).